A 160-amino-acid chain; its full sequence is Cyclic pyranopterin monophosphate synthase (160 aa).

Substrate contacts are provided by residues 74-76 (LSH) and 112-113 (ME). D127 is a catalytic residue.

This sequence belongs to the MoaC family. In terms of assembly, homohexamer; trimer of dimers.

The catalysed reaction is (8S)-3',8-cyclo-7,8-dihydroguanosine 5'-triphosphate = cyclic pyranopterin phosphate + diphosphate. Its pathway is cofactor biosynthesis; molybdopterin biosynthesis. Functionally, catalyzes the conversion of (8S)-3',8-cyclo-7,8-dihydroguanosine 5'-triphosphate to cyclic pyranopterin monophosphate (cPMP). This Geobacter sulfurreducens (strain ATCC 51573 / DSM 12127 / PCA) protein is Cyclic pyranopterin monophosphate synthase.